The chain runs to 243 residues: Large ribosomal subunit protein uL2 (243 aa).

The disordered stretch occupies residues 198 to 243 (VDHPFGGGGRQHPGKPKSVSRDTPPGRKVGDIASKRTGRGGKGGQE). Residues 221–231 (PPGRKVGDIAS) are compositionally biased toward basic and acidic residues.

Belongs to the universal ribosomal protein uL2 family. In terms of assembly, part of the 50S ribosomal subunit. Forms a bridge to the 30S subunit in the 70S ribosome.

Its function is as follows. One of the primary rRNA binding proteins. Required for association of the 30S and 50S subunits to form the 70S ribosome, for tRNA binding and peptide bond formation. It has been suggested to have peptidyltransferase activity; this is somewhat controversial. Makes several contacts with the 16S rRNA in the 70S ribosome. This is Large ribosomal subunit protein uL2 from Natronomonas pharaonis (strain ATCC 35678 / DSM 2160 / CIP 103997 / JCM 8858 / NBRC 14720 / NCIMB 2260 / Gabara) (Halobacterium pharaonis).